Consider the following 340-residue polypeptide: Proline-rich transmembrane protein 2 (340 aa).

Residues 1–261 (MAASSSEISE…AGPGVEGGEG (261 aa)) form a disordered region. Topologically, residues 1 to 268 (MAASSSEISE…GEGTQKPRDY (268 aa)) are cytoplasmic. Ser-28 carries the phosphoserine modification. Thr-74 bears the Phosphothreonine mark. Composition is skewed to pro residues over residues 131-155 (PPEP…PKPA) and 197-207 (APEPHSPPSKK). Position 238 is a phosphoserine (Ser-238). Position 240 is an omega-N-methylarginine (Arg-240). Phosphoserine is present on residues Ser-248 and Ser-249. The segment at residues 269–289 (IILAILSCFCPMWPVNIVAFA) is an intramembrane region (helical). The Cytoplasmic portion of the chain corresponds to 290–317 (YAVMSRNSLQQGDVDGAQRLGRVAKLLS). Residues 318 to 338 (IVALVGGVLIIIASCVINLGV) form a helical membrane-spanning segment. The Extracellular portion of the chain corresponds to 339–340 (YK).

Belongs to the CD225/Dispanin family. In terms of assembly, component of the outer core of AMPAR complex. AMPAR complex consists of an inner core made of 4 pore-forming GluA/GRIA proteins (GRIA1, GRIA2, GRIA3 and GRIA4) and 4 major auxiliary subunits arranged in a twofold symmetry. One of the two pairs of distinct binding sites is occupied either by CNIH2, CNIH3 or CACNG2, CACNG3. The other harbors CACNG2, CACNG3, CACNG4, CACNG8 or GSG1L. This inner core of AMPAR complex is complemented by outer core constituents binding directly to the GluA/GRIA proteins at sites distinct from the interaction sites of the inner core constituents. Outer core constituents include at least PRRT1, PRRT2, CKAMP44/SHISA9, FRRS1L and NRN1. The proteins of the inner and outer core serve as a platform for other, more peripherally associated AMPAR constituents. Alone or in combination, these auxiliary subunits control the gating and pharmacology of the AMPAR complex and profoundly impact their biogenesis and protein processing. Interacts with intersectin 1/ITSN1. Interacts with SNARE complex components, including SNAP25, STX1A, SYT1 and SYT2; this interaction may inhibit SNARE complex formation.

It localises to the cell membrane. The protein localises to the presynaptic cell membrane. Its subcellular location is the synapse. The protein resides in the cell projection. It is found in the axon. It localises to the cytoplasmic vesicle. The protein localises to the secretory vesicle. Its subcellular location is the synaptic vesicle membrane. The protein resides in the postsynaptic density membrane. It is found in the dendritic spine. In terms of biological role, as a component of the outer core of AMPAR complex, may be involved in synaptic transmission in the central nervous system. In hippocampal neurons, in presynaptic terminals, plays an important role in the final steps of neurotransmitter release, possibly by regulating Ca(2+)-sensing. In the cerebellum, may inhibit SNARE complex formation and down-regulate short-term facilitation. This is Proline-rich transmembrane protein 2 (PRRT2) from Pongo abelii (Sumatran orangutan).